A 1389-amino-acid chain; its full sequence is DNA-directed RNA polymerase subunit beta' (1389 aa).

C73, C75, C88, and C91 together coordinate Zn(2+). 3 residues coordinate Mg(2+): D464, D466, and D468. C810, C884, C891, and C894 together coordinate Zn(2+).

Belongs to the RNA polymerase beta' chain family. As to quaternary structure, the RNAP catalytic core consists of 2 alpha, 1 beta, 1 beta' and 1 omega subunit. When a sigma factor is associated with the core the holoenzyme is formed, which can initiate transcription. Requires Mg(2+) as cofactor. It depends on Zn(2+) as a cofactor.

It carries out the reaction RNA(n) + a ribonucleoside 5'-triphosphate = RNA(n+1) + diphosphate. Its function is as follows. DNA-dependent RNA polymerase catalyzes the transcription of DNA into RNA using the four ribonucleoside triphosphates as substrates. This is DNA-directed RNA polymerase subunit beta' from Pelagibacter ubique (strain HTCC1062).